Reading from the N-terminus, the 105-residue chain is PTS system lactose-specific EIIA component (105 aa).

Positions 4–102 (EEMTLLGFEI…IHHLIELYKR (99 aa)) constitute a PTS EIIA type-3 domain. Histidine 78 functions as the Tele-phosphohistidine intermediate in the catalytic mechanism. Histidine 78 bears the Phosphohistidine; by HPr mark. Residue aspartate 81 participates in Mg(2+) binding.

As to quaternary structure, homotrimer. Mg(2+) serves as cofactor.

It localises to the cytoplasm. The phosphoenolpyruvate-dependent sugar phosphotransferase system (sugar PTS), a major carbohydrate active transport system, catalyzes the phosphorylation of incoming sugar substrates concomitantly with their translocation across the cell membrane. The enzyme II LacEF PTS system is involved in lactose transport. The sequence is that of PTS system lactose-specific EIIA component from Lactococcus lactis subsp. lactis (Streptococcus lactis).